A 139-amino-acid polypeptide reads, in one-letter code: D-ribose pyranase (139 aa).

Catalysis depends on histidine 20, which acts as the Proton donor. Substrate contacts are provided by residues aspartate 28, histidine 106, and 128-130 (YAN).

This sequence belongs to the RbsD / FucU family. RbsD subfamily. As to quaternary structure, homodecamer.

The protein localises to the cytoplasm. The catalysed reaction is beta-D-ribopyranose = beta-D-ribofuranose. It participates in carbohydrate metabolism; D-ribose degradation; D-ribose 5-phosphate from beta-D-ribopyranose: step 1/2. In terms of biological role, catalyzes the interconversion of beta-pyran and beta-furan forms of D-ribose. The protein is D-ribose pyranase of Pectobacterium atrosepticum (strain SCRI 1043 / ATCC BAA-672) (Erwinia carotovora subsp. atroseptica).